The primary structure comprises 291 residues: 3-hydroxy-5-phosphonooxypentane-2,4-dione thiolase (291 aa).

Residue Lys203 is the Schiff-base intermediate with substrate of the active site.

Belongs to the DeoC/FbaB aldolase family. As to quaternary structure, homodecamer.

The protein localises to the cytoplasm. It catalyses the reaction dihydroxyacetone phosphate + acetyl-CoA = 3-hydroxy-2,4-dioxopentyl phosphate + CoA. Involved in the degradation of phospho-AI-2, thereby terminating induction of the lsr operon and closing the AI-2 signaling cycle. Catalyzes the transfer of an acetyl moiety from 3-hydroxy-5-phosphonooxypentane-2,4-dione to CoA to form glycerone phosphate and acetyl-CoA. The chain is 3-hydroxy-5-phosphonooxypentane-2,4-dione thiolase from Salmonella typhimurium (strain LT2 / SGSC1412 / ATCC 700720).